A 260-amino-acid chain; its full sequence is Adenosylcobinamide-GDP ribazoletransferase (260 aa).

8 helical membrane-spanning segments follow: residues 3 to 23 (APLW…LPAW), 36 to 56 (FAPW…LVLI), 60 to 80 (WPTS…SGGL), 108 to 128 (VGAS…AALL), 133 to 153 (LAPL…LWAM), 180 to 200 (ALPA…LMIV), 206 to 226 (MVLM…PELL), and 239 to 259 (GASV…LLTA).

The protein belongs to the CobS family. Mg(2+) is required as a cofactor.

The protein resides in the cell inner membrane. The enzyme catalyses alpha-ribazole + adenosylcob(III)inamide-GDP = adenosylcob(III)alamin + GMP + H(+). It catalyses the reaction alpha-ribazole 5'-phosphate + adenosylcob(III)inamide-GDP = adenosylcob(III)alamin 5'-phosphate + GMP + H(+). The protein operates within cofactor biosynthesis; adenosylcobalamin biosynthesis; adenosylcobalamin from cob(II)yrinate a,c-diamide: step 7/7. Joins adenosylcobinamide-GDP and alpha-ribazole to generate adenosylcobalamin (Ado-cobalamin). Also synthesizes adenosylcobalamin 5'-phosphate from adenosylcobinamide-GDP and alpha-ribazole 5'-phosphate. This Prochlorococcus marinus (strain MIT 9303) protein is Adenosylcobinamide-GDP ribazoletransferase.